We begin with the raw amino-acid sequence, 198 residues long: Phosphoheptose isomerase (198 aa).

One can recognise an SIS domain in the interval 40-198 (IVTALRSGRK…IEAALMQDLS (159 aa)). 55–57 (NGG) serves as a coordination point for substrate. Positions 64 and 68 each coordinate Zn(2+). Substrate-binding positions include Glu68, 97-98 (ND), 123-125 (STS), Ser128, and Gln175. Positions 175 and 183 each coordinate Zn(2+).

Belongs to the SIS family. GmhA subfamily. Homotetramer. It depends on Zn(2+) as a cofactor.

The protein resides in the cytoplasm. It catalyses the reaction 2 D-sedoheptulose 7-phosphate = D-glycero-alpha-D-manno-heptose 7-phosphate + D-glycero-beta-D-manno-heptose 7-phosphate. Its pathway is carbohydrate biosynthesis; D-glycero-D-manno-heptose 7-phosphate biosynthesis; D-glycero-alpha-D-manno-heptose 7-phosphate and D-glycero-beta-D-manno-heptose 7-phosphate from sedoheptulose 7-phosphate: step 1/1. Its function is as follows. Catalyzes the isomerization of sedoheptulose 7-phosphate in D-glycero-D-manno-heptose 7-phosphate. The chain is Phosphoheptose isomerase from Bradyrhizobium sp. (strain BTAi1 / ATCC BAA-1182).